Consider the following 708-residue polypeptide: WD repeat-containing and planar cell polarity effector protein fritz homolog (708 aa).

2 WD repeats span residues 303–342 (PLRSRVISCAVNTSEDKLVLGCEDSSLILYESDCKVTLLA) and 343–382 (QADLLPDLIRWHPNGTIFVVASSQGELQIFDMALSPIRAQ).

Belongs to the WD repeat fritz family. Interacts with sept2-a. Interacts with intu and fuz; fuz, intu and wdpcp probably form the core CPLANE (ciliogenesis and planar polarity effectors) complex.

The protein localises to the cell membrane. It is found in the cytoplasm. Its subcellular location is the cytoskeleton. It localises to the cilium axoneme. The protein resides in the cilium basal body. Functionally, probable effector of the planar cell polarity signaling pathway which regulates the septin cytoskeleton in both ciliogenesis and collective cell movements including covergent extension during gastrulation. Controls cell shape but not polarization during convergent extension. Proposed to function as core component of the CPLANE (ciliogenesis and planar polarity effectors) complex involved in the recruitment of peripheral IFT-A proteins to basal bodies. This is WD repeat-containing and planar cell polarity effector protein fritz homolog (wdpcp) from Xenopus laevis (African clawed frog).